The sequence spans 261 residues: Kallikrein 1-related peptidase b8 (261 aa).

The signal sequence occupies residues M1–A18. Residues P19–R24 constitute a propeptide, activation peptide. Residues V25–T258 form the Peptidase S1 domain. Intrachain disulfides connect C31–C173, C50–C66, C152–C219, C184–C198, and C209–C234. Residue H65 is the Charge relay system of the active site. N102 carries N-linked (GlcNAc...) asparagine glycosylation. The Charge relay system role is filled by D120. The active-site Charge relay system is the S213.

The protein belongs to the peptidase S1 family. Kallikrein subfamily.

It catalyses the reaction Preferential cleavage of Arg-|-Xaa bonds in small molecule substrates. Highly selective action to release kallidin (lysyl-bradykinin) from kininogen involves hydrolysis of Met-|-Xaa or Leu-|-Xaa.. Glandular kallikreins cleave Met-Lys and Arg-Ser bonds in kininogen to release Lys-bradykinin. This Mus musculus (Mouse) protein is Kallikrein 1-related peptidase b8 (Klk1b8).